A 422-amino-acid chain; its full sequence is Lactose-binding protein (422 aa).

An N-terminal signal peptide occupies residues 1–28 (MDYSRLLKRSVSAALTAAALLCSTAAFA). Positions 246–277 (SNDGIRALTSGDVASVLRGVWITGTVKSQPDQ) are lactose-binding.

This sequence belongs to the bacterial solute-binding protein 1 family.

The protein resides in the periplasm. Functionally, part of the binding-protein-dependent transport system for lactose. The sequence is that of Lactose-binding protein (lacE) from Rhizobium radiobacter (Agrobacterium tumefaciens).